The primary structure comprises 211 residues: Methylthioribulose-1-phosphate dehydratase (211 aa).

Zn(2+)-binding residues include H94 and H96.

It belongs to the aldolase class II family. MtnB subfamily. The cofactor is Zn(2+).

It carries out the reaction 5-(methylsulfanyl)-D-ribulose 1-phosphate = 5-methylsulfanyl-2,3-dioxopentyl phosphate + H2O. Its pathway is amino-acid biosynthesis; L-methionine biosynthesis via salvage pathway; L-methionine from S-methyl-5-thio-alpha-D-ribose 1-phosphate: step 2/6. Functionally, catalyzes the dehydration of methylthioribulose-1-phosphate (MTRu-1-P) into 2,3-diketo-5-methylthiopentyl-1-phosphate (DK-MTP-1-P). This Pseudoalteromonas translucida (strain TAC 125) protein is Methylthioribulose-1-phosphate dehydratase.